A 298-amino-acid chain; its full sequence is MIEKAGILIEALPYIRRFYGKTVVIKYGGNAMVAEELKESFAKDIVLMKYIGINPVVVHGGGPQIGRMLKRIGKESDFCAGMRVTDADTMDIVEMVLAGKINKEIVSLINRHGGHAVGLSGKDGNLIEARKLHVYRYKGDDQPPEIIDIGLVGEVNRVNVSILDTLAGGNLIPVIAPVGVGEQGETYNINADLVAGHIAGALQAAKLVLMTDVEGVLDGGGNLISSLTVAEAADALQDETLKGGMIPKVQCAIDALQSGVDKVHIVDGRVPHAILLEIFTDAGVGTEIVRYRRGQSVG.

Substrate contacts are provided by residues 61–62 (GG), Arg-83, and Asn-188.

It belongs to the acetylglutamate kinase family. ArgB subfamily.

The protein resides in the cytoplasm. It catalyses the reaction N-acetyl-L-glutamate + ATP = N-acetyl-L-glutamyl 5-phosphate + ADP. It functions in the pathway amino-acid biosynthesis; L-arginine biosynthesis; N(2)-acetyl-L-ornithine from L-glutamate: step 2/4. In terms of biological role, catalyzes the ATP-dependent phosphorylation of N-acetyl-L-glutamate. This is Acetylglutamate kinase from Syntrophobacter fumaroxidans (strain DSM 10017 / MPOB).